Consider the following 129-residue polypeptide: UPF0102 protein Cpar_0015 (129 aa).

This sequence belongs to the UPF0102 family.

The protein is UPF0102 protein Cpar_0015 of Chlorobaculum parvum (strain DSM 263 / NCIMB 8327) (Chlorobium vibrioforme subsp. thiosulfatophilum).